Consider the following 168-residue polypeptide: Protein YciE (168 aa).

The sequence is that of Protein YciE (yciE) from Escherichia coli (strain K12).